The sequence spans 930 residues: Xanthan lyase (930 aa).

A signal peptide spans 1–25 (MLSGILIAALLMTLWGGWQPDIAHA). Xanthan is bound by residues 146–148 (NWW), H246, Y255, R309, 313–315 (RSY), and N424. The Proton donor/acceptor role is filled by Y255. D515, D516, and E517 together coordinate Ca(2+). R612 provides a ligand contact to xanthan. E676 provides a ligand contact to Ca(2+).

The protein belongs to the polysaccharide lyase 8 family. Monomer.

The protein resides in the secreted. It carries out the reaction Eliminative cleavage of the terminal beta-D-mannosyl-(1-&gt;4)-beta-D-glucuronosyl linkage of the side-chain of the polysaccharide xanthan, leaving a 4-deoxy-alpha-L-threo-hex-4-enuronosyl group at the terminus of the side-chain.. With respect to regulation, activated by Co(2+) at 1 mM. Completely inhibited by Hg(2+) but not affected by other divalent cations. Intensely inhibited by NaCl and KCl at 150 mM, in particular by the Na(+) and K(+) ions but not the Cl(-) ions. Partially inhibited by iodoacetamide and N-ethylmaleimide at 1 mM but not by dithiothreitol, reduced glutathione or 2-mercaptoethanol. Its function is as follows. Plays a role in xanthan depolymerization pathway by cleaving the linkage between the terminal mannosyl and glucuronyl residues of the side chain of xanthan to liberate pyruvylated mannose. Is highly specific for pyruvylated side-chains of xanthan and is not effective with hyaluronate, chondroitin A, gellan, heparin or pectin. This is Xanthan lyase from Bacillus sp. (strain GL1).